The following is a 540-amino-acid chain: MTAPSTSSASSVVPSGADTSPHVAAIHEKILIVDFGSQVTQLIARRVREEGVYSEIVPFQKAEAAFAEMKPKAVILSGGPASVLDDNAPSAPMTILEAGVPVLGICYGEQTLAKQLGGTVEGGHHREFGRAQIEITDDCALFDGIWQKGGKYDVWMSHGDRVTKLPAGFRAVAQAPGSPISVIADDTRKFYAMQFHPEVVHTPDGAKLLSNFVRKVAGLTGDWTMRAFREEAIEKIRAQVGTGKVICGLSGGVDSAVAAVLIHEAIGDQLTCVFVDHGLLRKDEGKSVVDLFRHHYNIPLVHVDVSETFLGALKGVTDPEQKRKTIGKLFIDVFEAEARRVGGADFLAQGTLYPDVIESVSFTGGPSVTIKSHHNVGGLPERMNMKLVEPLRELFKDEVRALGRELGLPDVFVGRHPFPGPGLAIRCPGEITEEKLEILRNADAVYIDQIRKAGLYDVIWQAFAVLLPVRSVGVMGDGRTYDYVVGLRAVTSTDGMTADFYPFEMSFLGATATRIINEVKGVNRVVYDVTSKPPGTIEWE.

Positions 29–222 constitute a Glutamine amidotransferase type-1 domain; the sequence is KILIVDFGSQ…VRKVAGLTGD (194 aa). Cys-106 serves as the catalytic Nucleophile. Active-site residues include His-196 and Glu-198. In terms of domain architecture, GMPS ATP-PPase spans 223-415; that stretch reads WTMRAFREEA…LGLPDVFVGR (193 aa). 250–256 lines the ATP pocket; sequence SGGVDSA.

As to quaternary structure, homodimer.

The enzyme catalyses XMP + L-glutamine + ATP + H2O = GMP + L-glutamate + AMP + diphosphate + 2 H(+). Its pathway is purine metabolism; GMP biosynthesis; GMP from XMP (L-Gln route): step 1/1. Catalyzes the synthesis of GMP from XMP. The polypeptide is GMP synthase [glutamine-hydrolyzing] (Rhodopseudomonas palustris (strain ATCC BAA-98 / CGA009)).